The chain runs to 547 residues: Rho GTPase-activating protein 36 (547 aa).

Residues 1 to 40 form the signal peptide; sequence MGGCIPFLKAARALCPRIMPPLLLLSAFIFLVSVLGGAPG. Residues 226–426 enclose the Rho-GAP domain; that stretch reads MSLNPIAKQI…AMIDNWDVLF (201 aa). The segment at 485 to 547 is disordered; the sequence is AVLAQSKPSD…AKTGVSYFFP (63 aa). Basic and acidic residues predominate over residues 524 to 539; that stretch reads EQDRPLLRVPREKEAK.

In terms of assembly, may interacts (via the Rho-GAP domain) with the active form of RAC1. As to expression, detected in the outer root sheath of hair follicles at the level of the stem cell bulge, during the anagen and telogen phases of hair growth (at protein level).

GTPase activator for the Rho-type GTPases by converting them to an inactive GDP-bound state. The sequence is that of Rho GTPase-activating protein 36 (ARHGAP36) from Homo sapiens (Human).